Here is a 201-residue protein sequence, read N- to C-terminus: Large ribosomal subunit protein uL4 (201 aa).

The interval 43–71 is disordered; that stretch reads TRAQKTRSDVSGGGKKPWRQKGTGRARSG.

Belongs to the universal ribosomal protein uL4 family. As to quaternary structure, part of the 50S ribosomal subunit.

Its function is as follows. One of the primary rRNA binding proteins, this protein initially binds near the 5'-end of the 23S rRNA. It is important during the early stages of 50S assembly. It makes multiple contacts with different domains of the 23S rRNA in the assembled 50S subunit and ribosome. Functionally, forms part of the polypeptide exit tunnel. This is Large ribosomal subunit protein uL4 from Psychromonas ingrahamii (strain DSM 17664 / CCUG 51855 / 37).